Reading from the N-terminus, the 349-residue chain is Fructose-bisphosphate aldolase 2, chloroplastic (349 aa).

Arg-47 and Lys-137 together coordinate substrate. Glu-177 acts as the Proton acceptor in catalysis. Lys-219 serves as the catalytic Schiff-base intermediate with dihydroxyacetone-P.

Belongs to the class I fructose-bisphosphate aldolase family.

The protein localises to the plastid. It is found in the chloroplast. The enzyme catalyses beta-D-fructose 1,6-bisphosphate = D-glyceraldehyde 3-phosphate + dihydroxyacetone phosphate. Its pathway is carbohydrate degradation; glycolysis; D-glyceraldehyde 3-phosphate and glycerone phosphate from D-glucose: step 4/4. The protein is Fructose-bisphosphate aldolase 2, chloroplastic of Pisum sativum (Garden pea).